The sequence spans 80 residues: Acyl carrier protein (80 aa).

In terms of domain architecture, Carrier spans 4-79; that stretch reads DEIFSKVRSI…DVVNFIKKRK (76 aa). S39 is modified (O-(pantetheine 4'-phosphoryl)serine).

The protein belongs to the acyl carrier protein (ACP) family. In terms of processing, 4'-phosphopantetheine is transferred from CoA to a specific serine of apo-ACP by AcpS. This modification is essential for activity because fatty acids are bound in thioester linkage to the sulfhydryl of the prosthetic group.

It localises to the cytoplasm. It participates in lipid metabolism; fatty acid biosynthesis. In terms of biological role, carrier of the growing fatty acid chain in fatty acid biosynthesis. In Borreliella burgdorferi (strain ATCC 35210 / DSM 4680 / CIP 102532 / B31) (Borrelia burgdorferi), this protein is Acyl carrier protein.